The sequence spans 169 residues: Group 2 truncated hemoglobin 3-2 (169 aa).

Heme b is bound at residue His99.

The protein belongs to the truncated hemoglobin family. Group II subfamily. Homodimer when ferric.

In terms of biological role, hemoglobin-like protein that exhibits an unusual concentration-independent binding of O(2) and CO. Required for general plant development and during nodulation. May promote shoot organogenesis from root explants. The chain is Group 2 truncated hemoglobin 3-2 from Medicago truncatula (Barrel medic).